Here is a 137-residue protein sequence, read N- to C-terminus: uncharacterized protein (137 aa).

This is an uncharacterized protein from Acidianus convivator (ATV).